The following is a 149-amino-acid chain: Large ribosomal subunit protein bL9 (149 aa).

The protein belongs to the bacterial ribosomal protein bL9 family.

In terms of biological role, binds to the 23S rRNA. The sequence is that of Large ribosomal subunit protein bL9 from Klebsiella pneumoniae (strain 342).